The sequence spans 303 residues: Acetaldehyde dehydrogenase (303 aa).

13–16 (SGNI) is a binding site for NAD(+). The active-site Acyl-thioester intermediate is the C128. Residues 159-167 (SAGPGTRQN) and N278 each bind NAD(+).

The protein belongs to the acetaldehyde dehydrogenase family.

It carries out the reaction acetaldehyde + NAD(+) + CoA = acetyl-CoA + NADH + H(+). This chain is Acetaldehyde dehydrogenase, found in Chloroflexus aggregans (strain MD-66 / DSM 9485).